The primary structure comprises 772 residues: Phosphoribosylformylglycinamidine synthase subunit PurL (772 aa).

Histidine 62 is an active-site residue. ATP contacts are provided by tyrosine 65 and lysine 109. Glutamate 111 is a Mg(2+) binding site. Substrate-binding positions include 112 to 115 (SHNH) and arginine 134. Histidine 113 acts as the Proton acceptor in catalysis. Aspartate 135 contacts Mg(2+). Glutamine 259 contributes to the substrate binding site. Aspartate 287 provides a ligand contact to Mg(2+). 331–333 (ESQ) lines the substrate pocket. Residues aspartate 519 and glycine 556 each coordinate ATP. Asparagine 557 lines the Mg(2+) pocket. A substrate-binding site is contributed by serine 559.

Belongs to the FGAMS family. In terms of assembly, monomer. Part of the FGAM synthase complex composed of 1 PurL, 1 PurQ and 2 PurS subunits.

The protein localises to the cytoplasm. The enzyme catalyses N(2)-formyl-N(1)-(5-phospho-beta-D-ribosyl)glycinamide + L-glutamine + ATP + H2O = 2-formamido-N(1)-(5-O-phospho-beta-D-ribosyl)acetamidine + L-glutamate + ADP + phosphate + H(+). It participates in purine metabolism; IMP biosynthesis via de novo pathway; 5-amino-1-(5-phospho-D-ribosyl)imidazole from N(2)-formyl-N(1)-(5-phospho-D-ribosyl)glycinamide: step 1/2. Its function is as follows. Part of the phosphoribosylformylglycinamidine synthase complex involved in the purines biosynthetic pathway. Catalyzes the ATP-dependent conversion of formylglycinamide ribonucleotide (FGAR) and glutamine to yield formylglycinamidine ribonucleotide (FGAM) and glutamate. The FGAM synthase complex is composed of three subunits. PurQ produces an ammonia molecule by converting glutamine to glutamate. PurL transfers the ammonia molecule to FGAR to form FGAM in an ATP-dependent manner. PurS interacts with PurQ and PurL and is thought to assist in the transfer of the ammonia molecule from PurQ to PurL. This chain is Phosphoribosylformylglycinamidine synthase subunit PurL, found in Leifsonia xyli subsp. xyli (strain CTCB07).